A 139-amino-acid chain; its full sequence is MVKNGVLYLHLENIYQITIYKELPLEQKKLVDLGSLANWDIILLTKVLQAPYTKLNKSKLDIENKELLKIRLNYIKYENNLICKLEFDRDDDDLKELFKDKQVDSTLEVEKKVNKFKDIGNQYFTKKDYPEAVESYELA.

This is an uncharacterized protein from Dictyostelium discoideum (Social amoeba).